The sequence spans 497 residues: Tryptophan decarboxylase 2 (497 aa).

Pyridoxal 5'-phosphate-binding residues include Ala-162, Ser-163, Thr-257, and Asn-311. Lys-314 bears the N6-(pyridoxal phosphate)lysine mark.

It belongs to the group II decarboxylase family. Pyridoxal 5'-phosphate is required as a cofactor.

It carries out the reaction L-tryptophan + H(+) = tryptamine + CO2. Involved in serotonin biosynthesis. Catalyzes the decarboxylation of L-tryptophan to tryptamine, which is converted to serotonin by tryptamine 5-hydroxylase. May play a minor role in serotonin biosynthetis during senescence. Accumulation of serotonin attenuates leaf senescence. The protein is Tryptophan decarboxylase 2 of Oryza sativa subsp. japonica (Rice).